A 411-amino-acid chain; its full sequence is Phosphopentomutase (411 aa).

Mn(2+) contacts are provided by Asp14, Asp306, His311, Asp347, His348, and His359.

The protein belongs to the phosphopentomutase family. It depends on Mn(2+) as a cofactor.

It is found in the cytoplasm. The enzyme catalyses 2-deoxy-alpha-D-ribose 1-phosphate = 2-deoxy-D-ribose 5-phosphate. The catalysed reaction is alpha-D-ribose 1-phosphate = D-ribose 5-phosphate. Its pathway is carbohydrate degradation; 2-deoxy-D-ribose 1-phosphate degradation; D-glyceraldehyde 3-phosphate and acetaldehyde from 2-deoxy-alpha-D-ribose 1-phosphate: step 1/2. Its function is as follows. Isomerase that catalyzes the conversion of deoxy-ribose 1-phosphate (dRib-1-P) and ribose 1-phosphate (Rib-1-P) to deoxy-ribose 5-phosphate (dRib-5-P) and ribose 5-phosphate (Rib-5-P), respectively. This chain is Phosphopentomutase, found in Lactococcus lactis subsp. cremoris (strain MG1363).